A 335-amino-acid polypeptide reads, in one-letter code: Probable cyclin-H (335 aa).

This sequence belongs to the cyclin family. Cyclin C subfamily.

It localises to the nucleus. Regulates CDK7, the catalytic subunit of the CDK-activating kinase (CAK) enzymatic complex. The protein is Probable cyclin-H (CYCH) of Echinococcus multilocularis (Fox tapeworm).